Consider the following 216-residue polypeptide: Adenylate kinase (216 aa).

Position 10–15 (G10–T15) interacts with ATP. Residues S30–V59 are NMP. AMP-binding positions include T31, R36, K57–V59, G85–R88, and Q92. Residues G126 to D163 are LID. R127 provides a ligand contact to ATP. Zn(2+) contacts are provided by C130 and C133. V136 to Y137 lines the ATP pocket. Zn(2+) contacts are provided by C150 and C153. Residues R160 and R172 each contribute to the AMP site. ATP is bound at residue A200.

This sequence belongs to the adenylate kinase family. Monomer.

The protein localises to the cytoplasm. The enzyme catalyses AMP + ATP = 2 ADP. It participates in purine metabolism; AMP biosynthesis via salvage pathway; AMP from ADP: step 1/1. Catalyzes the reversible transfer of the terminal phosphate group between ATP and AMP. Plays an important role in cellular energy homeostasis and in adenine nucleotide metabolism. The protein is Adenylate kinase of Rhizobium etli (strain ATCC 51251 / DSM 11541 / JCM 21823 / NBRC 15573 / CFN 42).